A 221-amino-acid chain; its full sequence is Translation initiation factor 6 (221 aa).

This sequence belongs to the eIF-6 family.

Functionally, binds to the 50S ribosomal subunit and prevents its association with the 30S ribosomal subunit to form the 70S initiation complex. The protein is Translation initiation factor 6 of Natronomonas pharaonis (strain ATCC 35678 / DSM 2160 / CIP 103997 / JCM 8858 / NBRC 14720 / NCIMB 2260 / Gabara) (Halobacterium pharaonis).